Consider the following 422-residue polypeptide: Tyrosine--tRNA ligase (422 aa).

Residue Tyr-36 coordinates L-tyrosine. The 'HIGH' region motif lies at 41–50 (PTAGSLHIGH). L-tyrosine-binding residues include Tyr-174 and Gln-178. The 'KMSKS' region signature appears at 234–238 (KFGKT). Lys-237 contacts ATP. Residues 356–420 (TDLVTLLVES…GKKQYRLVTW (65 aa)) enclose the S4 RNA-binding domain.

The protein belongs to the class-I aminoacyl-tRNA synthetase family. TyrS type 1 subfamily. Homodimer.

Its subcellular location is the cytoplasm. The enzyme catalyses tRNA(Tyr) + L-tyrosine + ATP = L-tyrosyl-tRNA(Tyr) + AMP + diphosphate + H(+). Catalyzes the attachment of tyrosine to tRNA(Tyr) in a two-step reaction: tyrosine is first activated by ATP to form Tyr-AMP and then transferred to the acceptor end of tRNA(Tyr). This chain is Tyrosine--tRNA ligase, found in Aeromonas hydrophila subsp. hydrophila (strain ATCC 7966 / DSM 30187 / BCRC 13018 / CCUG 14551 / JCM 1027 / KCTC 2358 / NCIMB 9240 / NCTC 8049).